Here is a 250-residue protein sequence, read N- to C-terminus: Proteasome subunit alpha type-7-like (250 aa).

Residue Ser132 is glycosylated (O-linked (GlcNAc) serine).

Belongs to the peptidase T1A family. In terms of assembly, the 26S proteasome consists of a 20S proteasome core and two 19S regulatory subunits. The 20S proteasome core is a barrel-shaped complex made of 28 subunits that are arranged in four stacked rings. The two outer rings are each formed by seven alpha subunits, and the two inner rings are formed by seven beta subunits. The proteolytic activity is exerted by three beta-subunits PSMB5, PSMB6 and PSMB7. PSMA7 interacts directly with the PSMG1-PSMG2 heterodimer which promotes 20S proteasome assembly. Interacts with HIF1A. Interacts with RAB7A. Interacts with PRKN. Interacts with ABL1 and ABL2. Interacts with EMAP2. Interacts with MAVS.

It localises to the cytoplasm. It is found in the nucleus. In terms of biological role, component of the 20S core proteasome complex involved in the proteolytic degradation of most intracellular proteins. This complex plays numerous essential roles within the cell by associating with different regulatory particles. Associated with two 19S regulatory particles, forms the 26S proteasome and thus participates in the ATP-dependent degradation of ubiquitinated proteins. The 26S proteasome plays a key role in the maintenance of protein homeostasis by removing misfolded or damaged proteins that could impair cellular functions, and by removing proteins whose functions are no longer required. Associated with the PA200 or PA28, the 20S proteasome mediates ubiquitin-independent protein degradation. This type of proteolysis is required in several pathways including spermatogenesis (20S-PA200 complex) or generation of a subset of MHC class I-presented antigenic peptides (20S-PA28 complex). Inhibits the transactivation function of HIF-1A under both normoxic and hypoxia-mimicking conditions. The interaction with EMAP2 increases the proteasome-mediated HIF-1A degradation under the hypoxic conditions. Plays a role in hepatitis C virus internal ribosome entry site-mediated translation. Mediates nuclear translocation of the androgen receptor (AR) and thereby enhances androgen-mediated transactivation. Promotes MAVS degradation and thereby negatively regulates MAVS-mediated innate immune response. The protein is Proteasome subunit alpha type-7-like (PSMA7L) of Macaca fascicularis (Crab-eating macaque).